The sequence spans 389 residues: 3-oxo-Delta(4,5)-steroid 5-beta-reductase (389 aa).

Residues 35 to 37, 63 to 64, 81 to 82, T105, and Q143 contribute to the NADP(+) site; these read TGI, RR, and DI. Catalysis depends on residues K147 and Y179. Residues Y179, I206, and 213 to 215 contribute to the NADP(+) site; that span reads SMM.

The protein belongs to the short-chain dehydrogenases/reductases (SDR) family. Highly divergent. Homodimer.

It carries out the reaction 5beta-cholestan-3-one + NADP(+) = cholest-4-en-3-one + NADPH + H(+). It catalyses the reaction 4,5beta-dihydrocortisone + NADP(+) = cortisone + NADPH + H(+). Functionally, involved in cardenolide biosynthesis. Catalyzes the stereospecific conversion of progesterone to 5-beta-pregnane-3,20-dione. Can use progesterone, testosterone, 4-androstene-3,17-dione, cortisol and cortisone as substrates, but not pregnenolone, 21-OH-pregnenolone or isoprogesterone. NADPH could not be replaced by NADH. In Digitalis lanata (Grecian foxglove), this protein is 3-oxo-Delta(4,5)-steroid 5-beta-reductase.